Reading from the N-terminus, the 478-residue chain is Siroheme synthase (478 aa).

The precorrin-2 dehydrogenase /sirohydrochlorin ferrochelatase stretch occupies residues 1-207 (MTANVLFPLF…QRHAEAEAVL (207 aa)). Residues 25-26 (KV) and 46-47 (PS) contribute to the NAD(+) site. Ser132 carries the post-translational modification Phosphoserine. A uroporphyrinogen-III C-methyltransferase region spans residues 220 to 478 (GSVTLVGAGA…PCPPRTHPIS (259 aa)). Residue Asp252 is the Proton acceptor of the active site. Lys274 acts as the Proton donor in catalysis. S-adenosyl-L-methionine contacts are provided by residues 305-307 (GGD), Val310, 335-336 (TA), Met387, and Gly416.

It in the N-terminal section; belongs to the precorrin-2 dehydrogenase / sirohydrochlorin ferrochelatase family. In the C-terminal section; belongs to the precorrin methyltransferase family.

It carries out the reaction uroporphyrinogen III + 2 S-adenosyl-L-methionine = precorrin-2 + 2 S-adenosyl-L-homocysteine + H(+). The enzyme catalyses precorrin-2 + NAD(+) = sirohydrochlorin + NADH + 2 H(+). The catalysed reaction is siroheme + 2 H(+) = sirohydrochlorin + Fe(2+). The protein operates within cofactor biosynthesis; adenosylcobalamin biosynthesis; precorrin-2 from uroporphyrinogen III: step 1/1. It participates in cofactor biosynthesis; adenosylcobalamin biosynthesis; sirohydrochlorin from precorrin-2: step 1/1. Its pathway is porphyrin-containing compound metabolism; siroheme biosynthesis; precorrin-2 from uroporphyrinogen III: step 1/1. It functions in the pathway porphyrin-containing compound metabolism; siroheme biosynthesis; siroheme from sirohydrochlorin: step 1/1. The protein operates within porphyrin-containing compound metabolism; siroheme biosynthesis; sirohydrochlorin from precorrin-2: step 1/1. Functionally, multifunctional enzyme that catalyzes the SAM-dependent methylations of uroporphyrinogen III at position C-2 and C-7 to form precorrin-2 via precorrin-1. Then it catalyzes the NAD-dependent ring dehydrogenation of precorrin-2 to yield sirohydrochlorin. Finally, it catalyzes the ferrochelation of sirohydrochlorin to yield siroheme. The chain is Siroheme synthase from Xylella fastidiosa (strain M23).